Reading from the N-terminus, the 194-residue chain is ATP-dependent Clp protease proteolytic subunit 3 (194 aa).

Catalysis depends on Ser-96, which acts as the Nucleophile. The active site involves His-121.

The protein belongs to the peptidase S14 family. In terms of assembly, fourteen ClpP subunits assemble into 2 heptameric rings which stack back to back to give a disk-like structure with a central cavity, resembling the structure of eukaryotic proteasomes.

It localises to the cytoplasm. The enzyme catalyses Hydrolysis of proteins to small peptides in the presence of ATP and magnesium. alpha-casein is the usual test substrate. In the absence of ATP, only oligopeptides shorter than five residues are hydrolyzed (such as succinyl-Leu-Tyr-|-NHMec, and Leu-Tyr-Leu-|-Tyr-Trp, in which cleavage of the -Tyr-|-Leu- and -Tyr-|-Trp bonds also occurs).. Functionally, cleaves peptides in various proteins in a process that requires ATP hydrolysis. Has a chymotrypsin-like activity. Plays a major role in the degradation of misfolded proteins. The polypeptide is ATP-dependent Clp protease proteolytic subunit 3 (Prochlorococcus marinus (strain NATL2A)).